Consider the following 517-residue polypeptide: Maturase K (517 aa).

Belongs to the intron maturase 2 family. MatK subfamily.

The protein resides in the plastid. The protein localises to the chloroplast. Usually encoded in the trnK tRNA gene intron. Probably assists in splicing its own and other chloroplast group II introns. This is Maturase K from Juncus effusus (Soft rush).